An 87-amino-acid chain; its full sequence is Toxin Cll5b (87 aa).

An N-terminal signal peptide occupies residues 1–19 (MNSLLMITACLAEIGTVWA). Residues 20–85 (KEGYLVNKST…TYPLPNKSCS (66 aa)) enclose the LCN-type CS-alpha/beta domain. Cystine bridges form between Cys-31–Cys-84, Cys-35–Cys-60, Cys-44–Cys-65, and Cys-48–Cys-67. A propeptide spans 86–87 (KK) (removed by a carboxypeptidase).

The protein belongs to the long (4 C-C) scorpion toxin superfamily. Sodium channel inhibitor family. Beta subfamily. As to expression, expressed by the venom gland.

The protein localises to the secreted. In terms of biological role, beta toxins bind voltage-independently at site-4 of sodium channels (Nav) and shift the voltage of activation toward more negative potentials thereby affecting sodium channel activation and promoting spontaneous and repetitive firing. The protein is Toxin Cll5b of Centruroides limpidus (Mexican scorpion).